Consider the following 264-residue polypeptide: Small ribosomal subunit protein eS1 (264 aa).

Position 34 is an N6-acetyllysine; alternate (Lys34). Lys34 participates in a covalent cross-link: Glycyl lysine isopeptide (Lys-Gly) (interchain with G-Cter in SUMO2); alternate. The residue at position 56 (Lys56) is an N6-acetyllysine. At Tyr155 the chain carries ADP-ribosyltyrosine. Positions 232–264 are disordered; the sequence is HGEGSSSGKATGDETGAKVERADGYEPPVQESV. Phosphoserine is present on residues Ser236 and Ser237. Residues 242-255 are compositionally biased toward basic and acidic residues; that stretch reads TGDETGAKVERADG. Lys249 carries the post-translational modification N6-acetyllysine; alternate. Residue Lys249 forms a Glycyl lysine isopeptide (Lys-Gly) (interchain with G-Cter in SUMO2); alternate linkage. Tyr256 is subject to Phosphotyrosine. Ser263 carries the post-translational modification Phosphoserine.

Belongs to the eukaryotic ribosomal protein eS1 family. In terms of assembly, component of the small ribosomal subunit. Mature ribosomes consist of a small (40S) and a large (60S) subunit. The 40S subunit contains about 33 different proteins and 1 molecule of RNA (18S). The 60S subunit contains about 49 different proteins and 3 molecules of RNA (28S, 5.8S and 5S). Identified in a IGF2BP1-dependent mRNP granule complex containing untranslated mRNAs. Binds with high affinity to IPO4. Interacts with DDIT3. Part of the small subunit (SSU) processome, composed of more than 70 proteins and the RNA chaperone small nucleolar RNA (snoRNA) U3. ADP-ribosylated at Tyr-155 by PARP1 in presence of HPF1.

The protein localises to the cytoplasm. It is found in the nucleus. It localises to the nucleolus. Its function is as follows. Component of the small ribosomal subunit. The ribosome is a large ribonucleoprotein complex responsible for the synthesis of proteins in the cell. Part of the small subunit (SSU) processome, first precursor of the small eukaryotic ribosomal subunit. During the assembly of the SSU processome in the nucleolus, many ribosome biogenesis factors, an RNA chaperone and ribosomal proteins associate with the nascent pre-rRNA and work in concert to generate RNA folding, modifications, rearrangements and cleavage as well as targeted degradation of pre-ribosomal RNA by the RNA exosome. May play a role during erythropoiesis through regulation of transcription factor DDIT3. In Macaca fascicularis (Crab-eating macaque), this protein is Small ribosomal subunit protein eS1.